Here is a 366-residue protein sequence, read N- to C-terminus: Ribosomal RNA large subunit methyltransferase M (366 aa).

S-adenosyl-L-methionine is bound by residues S188, 221-224 (CPGG), D240, D260, and D277. Residue K306 is the Proton acceptor of the active site.

Belongs to the class I-like SAM-binding methyltransferase superfamily. RNA methyltransferase RlmE family. RlmM subfamily. As to quaternary structure, monomer.

Its subcellular location is the cytoplasm. It catalyses the reaction cytidine(2498) in 23S rRNA + S-adenosyl-L-methionine = 2'-O-methylcytidine(2498) in 23S rRNA + S-adenosyl-L-homocysteine + H(+). Its function is as follows. Catalyzes the 2'-O-methylation at nucleotide C2498 in 23S rRNA. The sequence is that of Ribosomal RNA large subunit methyltransferase M from Citrobacter koseri (strain ATCC BAA-895 / CDC 4225-83 / SGSC4696).